The following is a 55-amino-acid chain: Large ribosomal subunit protein bL33 (55 aa).

This sequence belongs to the bacterial ribosomal protein bL33 family.

This Ruegeria sp. (strain TM1040) (Silicibacter sp.) protein is Large ribosomal subunit protein bL33.